We begin with the raw amino-acid sequence, 170 residues long: Photosystem I assembly protein Ycf3 (170 aa).

TPR repeat units follow at residues 35–68 (AFTYYRDGMLAQSEGNYAEALQNYYEATRLEIDP), 72–105 (SYILYNIGLIHTSNGEHTKALEYYFRALERNPFL), and 120–153 (GEQAILQGDSEIAEAWFDQAAEYWKQAIALTPGN).

This sequence belongs to the Ycf3 family.

It localises to the plastid. The protein localises to the chloroplast thylakoid membrane. Functionally, essential for the assembly of the photosystem I (PSI) complex. May act as a chaperone-like factor to guide the assembly of the PSI subunits. The sequence is that of Photosystem I assembly protein Ycf3 from Oryza nivara (Indian wild rice).